The sequence spans 259 residues: MAVTIHQLRTWKEQGRPISVLTAWDFPFATLLDQAGVDVLLVGDSLAMVALGYPTTLPLTLDEMLYHAQAVTRGVNHALVICDLPFLSYQESPQQALRSAGTLLQQAGVAAVKLEGGYPDMAKTVHYLVDRGIPVMGHVGLTPQSVHQFSGYRRQGTSDVEADRILQEAIALEAAGAFAIVLEHIPAPLATKITQTLTIPTIGIGAGPGCDGQVLVTADMLGLSAWQPPFAKAYTNLQESITGAVQQFCDDVRHHQFPQ.

2 residues coordinate Mg(2+): Asp-44 and Asp-83. Residues 44–45 (DS), Asp-83, and Lys-113 contribute to the 3-methyl-2-oxobutanoate site. Glu-115 serves as a coordination point for Mg(2+). The Proton acceptor role is filled by Glu-183.

This sequence belongs to the PanB family. In terms of assembly, homodecamer; pentamer of dimers. It depends on Mg(2+) as a cofactor.

It is found in the cytoplasm. It carries out the reaction 3-methyl-2-oxobutanoate + (6R)-5,10-methylene-5,6,7,8-tetrahydrofolate + H2O = 2-dehydropantoate + (6S)-5,6,7,8-tetrahydrofolate. The protein operates within cofactor biosynthesis; (R)-pantothenate biosynthesis; (R)-pantoate from 3-methyl-2-oxobutanoate: step 1/2. Its function is as follows. Catalyzes the reversible reaction in which hydroxymethyl group from 5,10-methylenetetrahydrofolate is transferred onto alpha-ketoisovalerate to form ketopantoate. This chain is 3-methyl-2-oxobutanoate hydroxymethyltransferase, found in Acaryochloris marina (strain MBIC 11017).